We begin with the raw amino-acid sequence, 1424 residues long: DNA-directed RNA polymerase subunit beta' (1424 aa).

Positions 60, 62, 75, and 78 each coordinate Zn(2+). 3 residues coordinate Mg(2+): aspartate 449, aspartate 451, and aspartate 453. 4 residues coordinate Zn(2+): cysteine 783, cysteine 857, cysteine 864, and cysteine 867.

It belongs to the RNA polymerase beta' chain family. In terms of assembly, the RNAP catalytic core consists of 2 alpha, 1 beta, 1 beta' and 1 omega subunit. When a sigma factor is associated with the core the holoenzyme is formed, which can initiate transcription. It depends on Mg(2+) as a cofactor. Zn(2+) serves as cofactor.

It catalyses the reaction RNA(n) + a ribonucleoside 5'-triphosphate = RNA(n+1) + diphosphate. In terms of biological role, DNA-dependent RNA polymerase catalyzes the transcription of DNA into RNA using the four ribonucleoside triphosphates as substrates. This chain is DNA-directed RNA polymerase subunit beta', found in Treponema denticola (strain ATCC 35405 / DSM 14222 / CIP 103919 / JCM 8153 / KCTC 15104).